Reading from the N-terminus, the 2883-residue chain is Bifunctional DNA-directed RNA polymerase subunit beta-beta' (2883 aa).

Residues Met-1–Glu-1377 are DNA-directed RNA polymerase subunit beta. A DNA-directed RNA polymerase subunit beta' region spans residues Pro-1382–Ala-2883. The Zn(2+) site is built by Cys-1447, Cys-1449, Cys-1462, and Cys-1465. Residues Asp-1846, Asp-1848, and Asp-1850 each coordinate Mg(2+). Cys-2176, Cys-2250, Cys-2257, and Cys-2260 together coordinate Zn(2+).

This sequence in the N-terminal section; belongs to the RNA polymerase beta chain family. The protein in the C-terminal section; belongs to the RNA polymerase beta' chain family. In terms of assembly, the RNAP catalytic core consists of 2 alpha, 1 beta/beta' and 1 omega subunit. When a sigma factor is associated with the core the holoenzyme is formed, which can initiate transcription. Mg(2+) serves as cofactor. Zn(2+) is required as a cofactor.

The catalysed reaction is RNA(n) + a ribonucleoside 5'-triphosphate = RNA(n+1) + diphosphate. Functionally, DNA-dependent RNA polymerase catalyzes the transcription of DNA into RNA using the four ribonucleoside triphosphates as substrates. In Wolinella succinogenes (strain ATCC 29543 / DSM 1740 / CCUG 13145 / JCM 31913 / LMG 7466 / NCTC 11488 / FDC 602W) (Vibrio succinogenes), this protein is Bifunctional DNA-directed RNA polymerase subunit beta-beta' (rpoBC).